The chain runs to 273 residues: 4-hydroxy-tetrahydrodipicolinate reductase (273 aa).

NAD(+) is bound by residues 12 to 17 (GAGGRM) and Glu-38. Arg-39 is a binding site for NADP(+). NAD(+)-binding positions include 102–104 (GTT) and 126–129 (AANF). Residue His-159 is the Proton donor/acceptor of the active site. His-160 serves as a coordination point for (S)-2,3,4,5-tetrahydrodipicolinate. Lys-163 functions as the Proton donor in the catalytic mechanism. Residue 169 to 170 (GT) coordinates (S)-2,3,4,5-tetrahydrodipicolinate.

It belongs to the DapB family. As to quaternary structure, homotetramer.

The protein localises to the cytoplasm. It carries out the reaction (S)-2,3,4,5-tetrahydrodipicolinate + NAD(+) + H2O = (2S,4S)-4-hydroxy-2,3,4,5-tetrahydrodipicolinate + NADH + H(+). The catalysed reaction is (S)-2,3,4,5-tetrahydrodipicolinate + NADP(+) + H2O = (2S,4S)-4-hydroxy-2,3,4,5-tetrahydrodipicolinate + NADPH + H(+). It functions in the pathway amino-acid biosynthesis; L-lysine biosynthesis via DAP pathway; (S)-tetrahydrodipicolinate from L-aspartate: step 4/4. Functionally, catalyzes the conversion of 4-hydroxy-tetrahydrodipicolinate (HTPA) to tetrahydrodipicolinate. In Yersinia enterocolitica serotype O:8 / biotype 1B (strain NCTC 13174 / 8081), this protein is 4-hydroxy-tetrahydrodipicolinate reductase.